The sequence spans 124 residues: UPF0344 protein BH2983 (124 aa).

A run of 4 helical transmembrane segments spans residues 15–35 (GSWAILIILFLVSYFLIKAGK), 40–60 (KILHMIVRLFFVIMLITGAGM), 61–81 (LVYWQFAFLFIVKGVLAIVLI), and 102–122 (IYWIVFITCLVLVALIGYNVI).

This sequence belongs to the UPF0344 family.

Its subcellular location is the cell membrane. This chain is UPF0344 protein BH2983, found in Halalkalibacterium halodurans (strain ATCC BAA-125 / DSM 18197 / FERM 7344 / JCM 9153 / C-125) (Bacillus halodurans).